A 410-amino-acid chain; its full sequence is Centromere protein U (410 aa).

The segment at 1 to 72 is disordered; sequence MAARRSLRYS…YETFDPPLHS (72 aa). The short motif at 4-21 is the Nuclear localization signal element; the sequence is RRSLRYSGDPGAKRSRNT. Residues 28–38 show a composition bias toward basic residues; it reads RKQKAGQKPKR. Phosphothreonine; by PLK1 is present on threonine 73. The segment at 87–228 is disordered; it reads SSTSPATHRG…THSDASESMH (142 aa). Residues 101–115 show a composition bias toward polar residues; that stretch reads NLNPSENEASGNDSI. Serine 105, serine 110, serine 114, serine 130, serine 133, and serine 135 each carry phosphoserine. Over residues 138 to 149 the composition is skewed to basic and acidic residues; sequence DNVRRSVSIERP. Residues 158 to 169 show a composition bias toward low complexity; that stretch reads PAAASSSSSPSE. Residue lysine 179 forms a Glycyl lysine isopeptide (Lys-Gly) (interchain with G-Cter in SUMO2) linkage. A Phosphoserine modification is found at serine 186. Threonine 191 carries the post-translational modification Phosphothreonine. The segment covering 200–218 has biased composition (basic residues); it reads TQKKVRPSPGRRKRPRRGS. A Phosphoserine modification is found at serine 224. Residues 289–352 adopt a coiled-coil conformation; sequence QMLKALKRKN…LKNSKHFLSN (64 aa). The Nuclear localization signal motif lies at 295 to 312; sequence KRKNTKIISNMEKKRQRL.

This sequence belongs to the CENP-U/AME1 family. As to quaternary structure, component of the CENPA-NAC complex, at least composed of CENPA, CENPC, CENPH, CENPM, CENPN, CENPT and CENPU. The CENPA-NAC complex interacts with the CENPA-CAD complex, composed of CENPI, CENPK, CENPL, CENPO, CENPP, CENPQ, CENPR and CENPS. Interacts with MLF1. Post-translationally, phosphorylated by PLK1 at Thr-73, creating a self-tethering site that specifically interacts with the polo-box domain of PLK1. In terms of tissue distribution, expressed at high levels in glioblastoma cell lines. Up-regulated in GBM (glioblastoma multiforme) tumors. Significantly increased in both the tumor core as well as the contralateral striatum and cortex in gliomas.

The protein resides in the cytoplasm. It localises to the nucleus. It is found in the chromosome. Its subcellular location is the centromere. The protein localises to the kinetochore. Its function is as follows. Component of the CENPA-NAC (nucleosome-associated) complex, a complex that plays a central role in assembly of kinetochore proteins, mitotic progression and chromosome segregation. The CENPA-NAC complex recruits the CENPA-CAD (nucleosome distal) complex and may be involved in incorporation of newly synthesized CENPA into centromeres. Plays an important role in the correct PLK1 localization to the mitotic kinetochores. A scaffold protein responsible for the initial recruitment and maintenance of the kinetochore PLK1 population until its degradation. Involved in transcriptional repression. This chain is Centromere protein U (Cenpu), found in Rattus norvegicus (Rat).